We begin with the raw amino-acid sequence, 299 residues long: Recombination-associated protein RdgC (299 aa).

This sequence belongs to the RdgC family.

Its subcellular location is the cytoplasm. The protein resides in the nucleoid. Its function is as follows. May be involved in recombination. This chain is Recombination-associated protein RdgC, found in Neisseria meningitidis serogroup A / serotype 4A (strain DSM 15465 / Z2491).